The primary structure comprises 491 residues: Probable folate-biopterin transporter 4 (491 aa).

6 helical membrane-spanning segments follow: residues 14–34, 52–72, 84–104, 112–132, 154–174, and 179–199; these read VAFLWLVCLIYFTQGFRSFVW, SQFVFSVAFFPWSIKPLYGII, TPYLVISTVLSLVPWLVLGLD, LYLMIFLTVQNLGSAMADVVI, VSWFAMAVGGVCGSLLGGYAL, and IETIFLLFTVLPALQLLSCAL. The disordered stretch occupies residues 222–262; the sequence is KSLTSNDNYPDTSKSNTRRRKGQKKGKKGDSNGKSETQKKQ. A compositionally biased stretch (polar residues) spans 224 to 236; it reads LTSNDNYPDTSKS. Residues 237–248 show a composition bias toward basic residues; sequence NTRRRKGQKKGK. Residues 249–260 are compositionally biased toward basic and acidic residues; sequence KGDSNGKSETQK. Transmembrane regions (helical) follow at residues 294–314, 323–343, 356–376, 389–411, 437–457, and 461–481; these read MAWFFIAHITVPNLSTVMFYY, AAFLGTARVVGWLGLMFGTFI, SLLFAHIGLSVTILLDMVLVS, MVLFGSALGDAINQLKFMPFLIL, TVGSFMGAGLASLLGISSGSF, and FMGLAIQVFCTYIPVLFLFLI.

Belongs to the major facilitator superfamily. Folate-biopterin transporter (TC 2.A.71) family.

The protein localises to the membrane. Could mediate folate transport. This Arabidopsis thaliana (Mouse-ear cress) protein is Probable folate-biopterin transporter 4.